A 279-amino-acid polypeptide reads, in one-letter code: Tryptophan 2,3-dioxygenase (279 aa).

Substrate-binding positions include 48 to 52 (FIVIH), Tyr-110, and Arg-114. His-237 contributes to the heme binding site. Thr-251 provides a ligand contact to substrate.

It belongs to the tryptophan 2,3-dioxygenase family. Homotetramer. It depends on heme as a cofactor.

It catalyses the reaction L-tryptophan + O2 = N-formyl-L-kynurenine. The protein operates within amino-acid degradation; L-tryptophan degradation via kynurenine pathway; L-kynurenine from L-tryptophan: step 1/2. Functionally, heme-dependent dioxygenase that catalyzes the oxidative cleavage of the L-tryptophan (L-Trp) pyrrole ring and converts L-tryptophan to N-formyl-L-kynurenine. Catalyzes the oxidative cleavage of the indole moiety. This chain is Tryptophan 2,3-dioxygenase, found in Bacillus cereus (strain ATCC 10987 / NRS 248).